The following is a 1400-amino-acid chain: DNA-directed RNA polymerase subunit beta' (1400 aa).

Positions 71, 73, 86, and 89 each coordinate Zn(2+). Mg(2+) contacts are provided by D462, D464, and D466. Positions 810, 884, 891, and 894 each coordinate Zn(2+). Residues 1378–1400 (EKQATIVPPAAPEAEPLALPPAE) form a disordered region.

The protein belongs to the RNA polymerase beta' chain family. In terms of assembly, the RNAP catalytic core consists of 2 alpha, 1 beta, 1 beta' and 1 omega subunit. When a sigma factor is associated with the core the holoenzyme is formed, which can initiate transcription. Mg(2+) is required as a cofactor. It depends on Zn(2+) as a cofactor.

The enzyme catalyses RNA(n) + a ribonucleoside 5'-triphosphate = RNA(n+1) + diphosphate. DNA-dependent RNA polymerase catalyzes the transcription of DNA into RNA using the four ribonucleoside triphosphates as substrates. This chain is DNA-directed RNA polymerase subunit beta', found in Rhodopseudomonas palustris (strain BisB5).